The sequence spans 238 residues: Pyridoxine 5'-phosphate synthase (238 aa).

Residues N7 and R18 each coordinate 3-amino-2-oxopropyl phosphate. H43 (proton acceptor) is an active-site residue. Residues R45 and H50 each coordinate 1-deoxy-D-xylulose 5-phosphate. Catalysis depends on E70, which acts as the Proton acceptor. Position 100 (T100) interacts with 1-deoxy-D-xylulose 5-phosphate. The Proton donor role is filled by H190. 3-amino-2-oxopropyl phosphate contacts are provided by residues D191 and 213–214 (GH).

The protein belongs to the PNP synthase family. Homooctamer; tetramer of dimers.

It is found in the cytoplasm. The enzyme catalyses 3-amino-2-oxopropyl phosphate + 1-deoxy-D-xylulose 5-phosphate = pyridoxine 5'-phosphate + phosphate + 2 H2O + H(+). It participates in cofactor biosynthesis; pyridoxine 5'-phosphate biosynthesis; pyridoxine 5'-phosphate from D-erythrose 4-phosphate: step 5/5. Catalyzes the complicated ring closure reaction between the two acyclic compounds 1-deoxy-D-xylulose-5-phosphate (DXP) and 3-amino-2-oxopropyl phosphate (1-amino-acetone-3-phosphate or AAP) to form pyridoxine 5'-phosphate (PNP) and inorganic phosphate. In Parabacteroides distasonis (strain ATCC 8503 / DSM 20701 / CIP 104284 / JCM 5825 / NCTC 11152), this protein is Pyridoxine 5'-phosphate synthase.